Reading from the N-terminus, the 240-residue chain is Prolactin-8A6 (240 aa).

The first 30 residues, 1–30 (MALLLSQPHFSGPLLLLVVSNLLLWEKAAS), serve as a signal peptide directing secretion. 3 disulfides stabilise this stretch: C34–C41, C101–C216, and C233–C240. N-linked (GlcNAc...) asparagine glycosylation occurs at N212.

The protein belongs to the somatotropin/prolactin family. Expressed specifically in the spongiotrophoblast and trophoblast giant cells from the junctional zone of the chorioallantoic placenta.

It localises to the secreted. In Mus musculus (Mouse), this protein is Prolactin-8A6 (Prl8a6).